Here is a 393-residue protein sequence, read N- to C-terminus: D-alanyl-D-alanine carboxypeptidase DacA (393 aa).

Residues 1–18 (MLKRTTKIAFLSSFVALS) form the signal peptide. Residue serine 65 is the Acyl-ester intermediate of the active site. Lysine 68 functions as the Proton acceptor in the catalytic mechanism. Serine 128 is an active-site residue. Lysine 231 contributes to the substrate binding site.

Belongs to the peptidase S11 family.

The protein resides in the cell inner membrane. It catalyses the reaction Preferential cleavage: (Ac)2-L-Lys-D-Ala-|-D-Ala. Also transpeptidation of peptidyl-alanyl moieties that are N-acyl substituents of D-alanine.. It participates in cell wall biogenesis; peptidoglycan biosynthesis. Removes C-terminal D-alanyl residues from sugar-peptide cell wall precursors. The sequence is that of D-alanyl-D-alanine carboxypeptidase DacA (dacA) from Haemophilus influenzae (strain ATCC 51907 / DSM 11121 / KW20 / Rd).